We begin with the raw amino-acid sequence, 345 residues long: Ferritin-like-encapsulin shell fusion protein (345 aa).

The ferritin-like domain stretch occupies residues 1-109; it reads MLSINPTLIN…INDNKKEESN (109 aa). Glu-31, Glu-61, and His-64 together coordinate Fe cation. The encapsulin domain stretch occupies residues 110-345; the sequence is VEYFEKLRSA…KNPEAIVVLE (236 aa).

In the N-terminal section; belongs to the ferritin-like superfamily. The protein in the C-terminal section; belongs to the encapsulin family. Family 1 subfamily. 180 monomers assemble into 12 pentamers and 20 hexamers which further assemble into an icosahedral particle about 36.6 nm in diameter. The N-terminal domain (residues 1-99) crystallizes as 3 decamers.

It localises to the encapsulin nanocompartment. It catalyses the reaction 4 Fe(2+) + O2 + 4 H(+) = 4 Fe(3+) + 2 H2O. Its activity is regulated as follows. The ferroxidase activity is inhibited by zinc. In terms of biological role, fusion of the shell and cargo protein of a type 1 encapsulin nanocompartment. The nanocompartment is probably involved in iron storage. Expression in E.coli generates spherical particles (PfSPs) about 30 nm in diameter. The purified N-terminus has ferroxidase activity. In Pyrococcus furiosus (strain ATCC 43587 / DSM 3638 / JCM 8422 / Vc1), this protein is Ferritin-like-encapsulin shell fusion protein.